The primary structure comprises 243 residues: ATP synthase subunit a (243 aa).

7 helical membrane-spanning segments follow: residues 29–49 (NASL…YIGL), 54–74 (IIPN…VSTI), 89–109 (VFTI…PLGF), 114–134 (HIAV…IIGF), 144–164 (ILLP…IELF), 182–202 (IAGH…NIFL), and 208–228 (IFII…AYIF).

It belongs to the ATPase A chain family. F-type ATPases have 2 components, CF(1) - the catalytic core - and CF(0) - the membrane proton channel. CF(1) has five subunits: alpha(3), beta(3), gamma(1), delta(1), epsilon(1). CF(0) has three main subunits: a(1), b(2) and c(9-12). The alpha and beta chains form an alternating ring which encloses part of the gamma chain. CF(1) is attached to CF(0) by a central stalk formed by the gamma and epsilon chains, while a peripheral stalk is formed by the delta and b chains.

The protein localises to the cell inner membrane. Key component of the proton channel; it plays a direct role in the translocation of protons across the membrane. This chain is ATP synthase subunit a, found in Ehrlichia canis (strain Jake).